We begin with the raw amino-acid sequence, 722 residues long: Polyribonucleotide nucleotidyltransferase (722 aa).

Residues aspartate 495 and aspartate 501 each contribute to the Mg(2+) site. Residues 561 to 620 (PRLYVMKINPEKIREVIGKGGETIRSITKDTGCEINIEEDGTITIASVSSEGAEAAKKRI) enclose the KH domain. The S1 motif domain maps to 630-700 (GKVYEGTVVK…DRGRIRLSIK (71 aa)).

This sequence belongs to the polyribonucleotide nucleotidyltransferase family. Mg(2+) serves as cofactor.

The protein resides in the cytoplasm. It carries out the reaction RNA(n+1) + phosphate = RNA(n) + a ribonucleoside 5'-diphosphate. In terms of biological role, involved in mRNA degradation. Catalyzes the phosphorolysis of single-stranded polyribonucleotides processively in the 3'- to 5'-direction. This chain is Polyribonucleotide nucleotidyltransferase, found in Chromobacterium violaceum (strain ATCC 12472 / DSM 30191 / JCM 1249 / CCUG 213 / NBRC 12614 / NCIMB 9131 / NCTC 9757 / MK).